The sequence spans 290 residues: tRNA dimethylallyltransferase (290 aa).

An ATP-binding site is contributed by glycine 9–threonine 16. Threonine 11–threonine 16 is a substrate binding site. The tract at residues aspartate 34–glutamine 37 is interaction with substrate tRNA.

This sequence belongs to the IPP transferase family. In terms of assembly, monomer. Requires Mg(2+) as cofactor.

The catalysed reaction is adenosine(37) in tRNA + dimethylallyl diphosphate = N(6)-dimethylallyladenosine(37) in tRNA + diphosphate. In terms of biological role, catalyzes the transfer of a dimethylallyl group onto the adenine at position 37 in tRNAs that read codons beginning with uridine, leading to the formation of N6-(dimethylallyl)adenosine (i(6)A). The polypeptide is tRNA dimethylallyltransferase (Phytoplasma australiense).